Here is a 602-residue protein sequence, read N- to C-terminus: Elongation factor 4 (602 aa).

The tr-type G domain maps to 7-188 (ENIRNFSIIA…SIIRLVPPPK (182 aa)). GTP contacts are provided by residues 19 to 24 (DHGKST) and 135 to 138 (NKID).

It belongs to the TRAFAC class translation factor GTPase superfamily. Classic translation factor GTPase family. LepA subfamily.

Its subcellular location is the cell inner membrane. It catalyses the reaction GTP + H2O = GDP + phosphate + H(+). Functionally, required for accurate and efficient protein synthesis under certain stress conditions. May act as a fidelity factor of the translation reaction, by catalyzing a one-codon backward translocation of tRNAs on improperly translocated ribosomes. Back-translocation proceeds from a post-translocation (POST) complex to a pre-translocation (PRE) complex, thus giving elongation factor G a second chance to translocate the tRNAs correctly. Binds to ribosomes in a GTP-dependent manner. This chain is Elongation factor 4, found in Chlamydia muridarum (strain MoPn / Nigg).